Consider the following 554-residue polypeptide: Valerianol synthase TPS1A (554 aa).

The Mg(2+) site is built by D307 and D311. Positions 326–330 match the DDXXD motif motif; that stretch reads VQRWD. Mg(2+) contacts are provided by D452, S456, and E460.

Belongs to the terpene synthase family. Mg(2+) serves as cofactor. As to expression, expressed in flowers.

The enzyme catalyses (2E,6E)-farnesyl diphosphate + H2O = valerianol + diphosphate. Its pathway is secondary metabolite biosynthesis; terpenoid biosynthesis. Terpene synthase that catalyzes the biosynthesis of the terpene valerianol, which is a volatile compound of floral scent. In Camellia hiemalis (Camellia), this protein is Valerianol synthase TPS1A.